A 178-amino-acid polypeptide reads, in one-letter code: Protein 105R (178 aa).

A signal peptide spans 1–18 (MYFLFFFLLFLFPVGVKG).

The polypeptide is Protein 105R (Pantherophis guttatus (Corn snake)).